Consider the following 1058-residue polypeptide: Carbamoyl phosphate synthase large chain (1058 aa).

The tract at residues Met-1 to Glu-401 is carboxyphosphate synthetic domain. ATP-binding residues include Arg-129, Arg-169, Gly-175, Gly-176, Arg-208, Ile-210, Glu-215, Gly-241, Ile-242, His-243, Gln-284, and Glu-298. The 195-residue stretch at Lys-133–Val-327 folds into the ATP-grasp 1 domain. Mg(2+) contacts are provided by Gln-284, Glu-298, and Asn-300. Mn(2+) contacts are provided by Gln-284, Glu-298, and Asn-300. Residues Ile-402 to Ser-546 are oligomerization domain. Positions Ile-547–Tyr-929 are carbamoyl phosphate synthetic domain. Positions Glu-671 to Leu-861 constitute an ATP-grasp 2 domain. The ATP site is built by Arg-707, Ser-746, Ile-748, Glu-752, Gly-777, Val-778, His-779, Ser-780, Gln-820, and Glu-832. Mg(2+) is bound by residues Gln-820, Glu-832, and Asn-834. The Mn(2+) site is built by Gln-820, Glu-832, and Asn-834. Residues Leu-930–Ile-1058 enclose the MGS-like domain. Positions Leu-930–Ile-1058 are allosteric domain.

It belongs to the CarB family. Composed of two chains; the small (or glutamine) chain promotes the hydrolysis of glutamine to ammonia, which is used by the large (or ammonia) chain to synthesize carbamoyl phosphate. Tetramer of heterodimers (alpha,beta)4. Mg(2+) serves as cofactor. Requires Mn(2+) as cofactor.

The enzyme catalyses hydrogencarbonate + L-glutamine + 2 ATP + H2O = carbamoyl phosphate + L-glutamate + 2 ADP + phosphate + 2 H(+). It catalyses the reaction hydrogencarbonate + NH4(+) + 2 ATP = carbamoyl phosphate + 2 ADP + phosphate + 2 H(+). Its pathway is amino-acid biosynthesis; L-arginine biosynthesis; carbamoyl phosphate from bicarbonate: step 1/1. It participates in pyrimidine metabolism; UMP biosynthesis via de novo pathway; (S)-dihydroorotate from bicarbonate: step 1/3. Functionally, large subunit of the glutamine-dependent carbamoyl phosphate synthetase (CPSase). CPSase catalyzes the formation of carbamoyl phosphate from the ammonia moiety of glutamine, carbonate, and phosphate donated by ATP, constituting the first step of 2 biosynthetic pathways, one leading to arginine and/or urea and the other to pyrimidine nucleotides. The large subunit (synthetase) binds the substrates ammonia (free or transferred from glutamine from the small subunit), hydrogencarbonate and ATP and carries out an ATP-coupled ligase reaction, activating hydrogencarbonate by forming carboxy phosphate which reacts with ammonia to form carbamoyl phosphate. This Streptococcus pneumoniae (strain 70585) protein is Carbamoyl phosphate synthase large chain.